We begin with the raw amino-acid sequence, 106 residues long: ATP-dependent Clp protease adapter protein ClpS (106 aa).

Belongs to the ClpS family. In terms of assembly, binds to the N-terminal domain of the chaperone ClpA.

Its function is as follows. Involved in the modulation of the specificity of the ClpAP-mediated ATP-dependent protein degradation. The sequence is that of ATP-dependent Clp protease adapter protein ClpS from Vibrio campbellii (strain ATCC BAA-1116).